A 454-amino-acid chain; its full sequence is Mediator of RNA polymerase II transcription subunit 1 (454 aa).

It belongs to the Mediator complex subunit 1 family. As to quaternary structure, component of the Mediator complex.

It localises to the nucleus. Component of the Mediator complex, a coactivator involved in the regulated transcription of nearly all RNA polymerase II-dependent genes. Mediator functions as a bridge to convey information from gene-specific regulatory proteins to the basal RNA polymerase II transcription machinery. Mediator is recruited to promoters by direct interactions with regulatory proteins and serves as a scaffold for the assembly of a functional preinitiation complex with RNA polymerase II and the general transcription factors. This is Mediator of RNA polymerase II transcription subunit 1 (med1) from Schizosaccharomyces pombe (strain 972 / ATCC 24843) (Fission yeast).